A 132-amino-acid chain; its full sequence is Urease subunit beta (132 aa).

This sequence belongs to the urease beta subunit family. In terms of assembly, heterotrimer of UreA (gamma), UreB (beta) and UreC (alpha) subunits. Three heterotrimers associate to form the active enzyme.

Its subcellular location is the cytoplasm. It catalyses the reaction urea + 2 H2O + H(+) = hydrogencarbonate + 2 NH4(+). It functions in the pathway nitrogen metabolism; urea degradation; CO(2) and NH(3) from urea (urease route): step 1/1. This Natronomonas pharaonis (strain ATCC 35678 / DSM 2160 / CIP 103997 / JCM 8858 / NBRC 14720 / NCIMB 2260 / Gabara) (Halobacterium pharaonis) protein is Urease subunit beta.